Reading from the N-terminus, the 92-residue chain is Ictacalcin (92 aa).

2 consecutive EF-hand domains span residues 12–47 (ISTFHKYSGKEGDKCTLTKGELKDLLTKELGGAFGN) and 49–84 (SDQATLDKIFKDLDTNADGVVDFQEYATMVACTTML). Ca(2+) contacts are provided by T27, E32, D62, N64, D66, and E73.

The protein belongs to the S-100 family. In terms of tissue distribution, abundant in epithelial cells of olfactory rosette, barbel, skin and gill but not brain or muscle.

Plays an important role in catfish calcium homeostasis. The sequence is that of Ictacalcin from Ictalurus punctatus (Channel catfish).